Reading from the N-terminus, the 100-residue chain is Colipase-like protein 2 (100 aa).

The signal sequence occupies residues 1–21 (MAAALALVAGVLSGAVLPLWS). Disulfide bonds link Cys34–Cys45, Cys40–Cys56, Cys44–Cys78, Cys66–Cys86, and Cys80–Cys97.

This sequence belongs to the colipase family.

It is found in the secreted. This chain is Colipase-like protein 2 (CLPSL2), found in Homo sapiens (Human).